The primary structure comprises 199 residues: Glycerol-3-phosphate acyltransferase (199 aa).

Helical transmembrane passes span 5–25 (VLTIVIIVGAYLAGSVSSAVL), 56–76 (SAALVLFCDMLKGAAPAYLAF), 83–103 (IALGVIAIAACLGHIFPIFFG), 118–138 (APIGHDLALCLLASWIVLVLV), and 141–161 (YSSFAAICTALLAPVYTWWLD).

It belongs to the PlsY family. In terms of assembly, probably interacts with PlsX.

The protein resides in the cell inner membrane. The catalysed reaction is an acyl phosphate + sn-glycerol 3-phosphate = a 1-acyl-sn-glycero-3-phosphate + phosphate. The protein operates within lipid metabolism; phospholipid metabolism. Its function is as follows. Catalyzes the transfer of an acyl group from acyl-phosphate (acyl-PO(4)) to glycerol-3-phosphate (G3P) to form lysophosphatidic acid (LPA). This enzyme utilizes acyl-phosphate as fatty acyl donor, but not acyl-CoA or acyl-ACP. This is Glycerol-3-phosphate acyltransferase from Shewanella halifaxensis (strain HAW-EB4).